We begin with the raw amino-acid sequence, 408 residues long: Subtilisin-like protease 6 (408 aa).

Positions 1–20 (MGFITKAIPIVLAALSTVDG) are cleaved as a signal peptide. Positions 21–123 (AKILEAGPHA…RDTVVKATAI (103 aa)) are excised as a propeptide. Residues 36–119 (KYIVVMKQDV…DFIERDTVVK (84 aa)) enclose the Inhibitor I9 domain. Residues 131–408 (SWGLARVGSK…GKLIYNGSGK (278 aa)) enclose the Peptidase S8 domain. Residues Asp-163 and His-194 each act as charge relay system in the active site. Asn-248, Asn-260, and Asn-345 each carry an N-linked (GlcNAc...) asparagine glycan. The active-site Charge relay system is Ser-354. N-linked (GlcNAc...) asparagine glycosylation is present at Asn-404.

It belongs to the peptidase S8 family.

The protein localises to the secreted. Functionally, secreted subtilisin-like serine protease with keratinolytic activity that contributes to pathogenicity. This chain is Subtilisin-like protease 6 (SUB6), found in Arthroderma gypseum (strain ATCC MYA-4604 / CBS 118893) (Microsporum gypseum).